A 527-amino-acid polypeptide reads, in one-letter code: ATP synthase subunit alpha (527 aa).

172–179 (GDRQTGKT) serves as a coordination point for ATP.

The protein belongs to the ATPase alpha/beta chains family. In terms of assembly, F-type ATPases have 2 components, CF(1) - the catalytic core - and CF(0) - the membrane proton channel. CF(1) has five subunits: alpha(3), beta(3), gamma(1), delta(1), epsilon(1). CF(0) has three main subunits: a(1), b(2) and c(9-12). The alpha and beta chains form an alternating ring which encloses part of the gamma chain. CF(1) is attached to CF(0) by a central stalk formed by the gamma and epsilon chains, while a peripheral stalk is formed by the delta and b chains.

Its subcellular location is the cell inner membrane. The enzyme catalyses ATP + H2O + 4 H(+)(in) = ADP + phosphate + 5 H(+)(out). In terms of biological role, produces ATP from ADP in the presence of a proton gradient across the membrane. The alpha chain is a regulatory subunit. The chain is ATP synthase subunit alpha from Bacteroides fragilis (strain ATCC 25285 / DSM 2151 / CCUG 4856 / JCM 11019 / LMG 10263 / NCTC 9343 / Onslow / VPI 2553 / EN-2).